Here is a 178-residue protein sequence, read N- to C-terminus: Large ribosomal subunit protein uL6 (178 aa).

The protein belongs to the universal ribosomal protein uL6 family. As to quaternary structure, part of the 50S ribosomal subunit.

Its function is as follows. This protein binds to the 23S rRNA, and is important in its secondary structure. It is located near the subunit interface in the base of the L7/L12 stalk, and near the tRNA binding site of the peptidyltransferase center. The polypeptide is Large ribosomal subunit protein uL6 (Staphylococcus aureus (strain Mu3 / ATCC 700698)).